The following is a 105-amino-acid chain: Large ribosomal subunit protein uL24 (105 aa).

Belongs to the universal ribosomal protein uL24 family. As to quaternary structure, part of the 50S ribosomal subunit.

In terms of biological role, one of two assembly initiator proteins, it binds directly to the 5'-end of the 23S rRNA, where it nucleates assembly of the 50S subunit. Functionally, one of the proteins that surrounds the polypeptide exit tunnel on the outside of the subunit. The chain is Large ribosomal subunit protein uL24 from Halorhodospira halophila (strain DSM 244 / SL1) (Ectothiorhodospira halophila (strain DSM 244 / SL1)).